We begin with the raw amino-acid sequence, 362 residues long: Phosphoserine aminotransferase (362 aa).

2 residues coordinate L-glutamate: S9 and R42. Pyridoxal 5'-phosphate-binding positions include 76 to 77, W102, T153, D174, and Q197; that span reads GR. Position 198 is an N6-(pyridoxal phosphate)lysine (K198). A pyridoxal 5'-phosphate-binding site is contributed by 239–240; it reads NT.

Belongs to the class-V pyridoxal-phosphate-dependent aminotransferase family. SerC subfamily. As to quaternary structure, homodimer. The cofactor is pyridoxal 5'-phosphate.

The protein localises to the cytoplasm. It catalyses the reaction O-phospho-L-serine + 2-oxoglutarate = 3-phosphooxypyruvate + L-glutamate. The catalysed reaction is 4-(phosphooxy)-L-threonine + 2-oxoglutarate = (R)-3-hydroxy-2-oxo-4-phosphooxybutanoate + L-glutamate. It participates in amino-acid biosynthesis; L-serine biosynthesis; L-serine from 3-phospho-D-glycerate: step 2/3. It functions in the pathway cofactor biosynthesis; pyridoxine 5'-phosphate biosynthesis; pyridoxine 5'-phosphate from D-erythrose 4-phosphate: step 3/5. Functionally, catalyzes the reversible conversion of 3-phosphohydroxypyruvate to phosphoserine and of 3-hydroxy-2-oxo-4-phosphonooxybutanoate to phosphohydroxythreonine. In Enterobacter sp. (strain 638), this protein is Phosphoserine aminotransferase.